The primary structure comprises 362 residues: Acetylglutamate kinase (362 aa).

Pro residues predominate over residues 1–11 (MNAPTRTPPPS). Residues 1 to 42 (MNAPTRTPPPSNGGHGSTGSTGSTGDAAPGGGTGRGPAATAR) are disordered. Residues 106–107 (GG), Arg-128, and Asn-227 each bind substrate. Residues 329-362 (MAESGTSPEPGTPPAPAARPAGIVPAGEPTGGTP) form a disordered region. A compositionally biased stretch (low complexity) spans 346–355 (ARPAGIVPAG).

Belongs to the acetylglutamate kinase family. ArgB subfamily.

The protein resides in the cytoplasm. It catalyses the reaction N-acetyl-L-glutamate + ATP = N-acetyl-L-glutamyl 5-phosphate + ADP. It functions in the pathway amino-acid biosynthesis; L-arginine biosynthesis; N(2)-acetyl-L-ornithine from L-glutamate: step 2/4. Its function is as follows. Catalyzes the ATP-dependent phosphorylation of N-acetyl-L-glutamate. This is Acetylglutamate kinase from Frankia casuarinae (strain DSM 45818 / CECT 9043 / HFP020203 / CcI3).